Reading from the N-terminus, the 259-residue chain is 5'-nucleotidase SurE (259 aa).

Aspartate 13, aspartate 14, serine 44, and asparagine 101 together coordinate a divalent metal cation.

It belongs to the SurE nucleotidase family. The cofactor is a divalent metal cation.

The protein localises to the cytoplasm. It catalyses the reaction a ribonucleoside 5'-phosphate + H2O = a ribonucleoside + phosphate. Functionally, nucleotidase that shows phosphatase activity on nucleoside 5'-monophosphates. The polypeptide is 5'-nucleotidase SurE (Flavobacterium johnsoniae (strain ATCC 17061 / DSM 2064 / JCM 8514 / BCRC 14874 / CCUG 350202 / NBRC 14942 / NCIMB 11054 / UW101) (Cytophaga johnsonae)).